We begin with the raw amino-acid sequence, 233 residues long: Large ribosomal subunit protein uL1 (233 aa).

Belongs to the universal ribosomal protein uL1 family. As to quaternary structure, part of the 50S ribosomal subunit.

Functionally, binds directly to 23S rRNA. The L1 stalk is quite mobile in the ribosome, and is involved in E site tRNA release. Its function is as follows. Protein L1 is also a translational repressor protein, it controls the translation of the L11 operon by binding to its mRNA. In Buchnera aphidicola subsp. Baizongia pistaciae (strain Bp), this protein is Large ribosomal subunit protein uL1.